Consider the following 494-residue polypeptide: Tripartite motif-containing protein 5 (494 aa).

A2 carries the N-acetylalanine modification. An RING-type zinc finger spans residues 15 to 59 (CPICLELLTEPLSLDCGHSFCQACITANHKESTLHQGERSCPLCR). S86 bears the Phosphoserine mark. The B box-type zinc-finger motif lies at 91-132 (QKVDLCARHGEKLLLFCQQDGNVICWLCERSQEHRGHHTFLV). Positions 96, 99, 118, and 124 each coordinate Zn(2+). Positions 140–223 (RENLQVVLEM…RLVQSENDMV (84 aa)) form a coiled coil. Residues 186 to 199 (FKQLRDILDCEESN) form a required for interaction with GABARAP and for autophagy region. Residues 280–494 (PDLKGMLQVS…LPMTLCSPRS (215 aa)) form the B30.2/SPRY domain.

It belongs to the TRIM/RBCC family. In terms of assembly, can form homodimers and homotrimers. In addition to lower-order dimerization, also exhibits a higher-order multimerization and both low- and high-order multimerizations are essential for its restriction activity. Interacts with BTBD1 and BTBD2. Interacts with PSMC4, PSMC5, PSMD7 and HSPA8/HSC70. Interacts (via B30.2/SPRY domain) with HSPA1A/B. Interacts with PSMC2, MAP3K7/TAK1, TAB2 and TAB3. Interacts with SQSTM1. Interacts with TRIM6 and TRIM34. Interacts with ULK1 (phosphorylated form), GABARAP, GABARAPL1, GABARAPL2, MAP1LC3A, MAP1LC3C and BECN1. Degraded in a proteasome-independent fashion in the absence of viral infection but in a proteasome-dependent fashion following exposure to restriction sensitive virus. Post-translationally, autoubiquitinated in a RING finger- and UBE2D2-dependent manner. Monoubiquitinated by TRIM21. Deubiquitinated by Yersinia YopJ. Ubiquitination may not lead to proteasomal degradation.

The protein localises to the cytoplasm. It is found in the nucleus. It catalyses the reaction S-ubiquitinyl-[E2 ubiquitin-conjugating enzyme]-L-cysteine + [acceptor protein]-L-lysine = [E2 ubiquitin-conjugating enzyme]-L-cysteine + N(6)-ubiquitinyl-[acceptor protein]-L-lysine.. It participates in protein modification; protein ubiquitination. Capsid-specific restriction factor that prevents infection from non-host-adapted retroviruses. Blocks viral replication early in the life cycle, after viral entry but before reverse transcription. In addition to acting as a capsid-specific restriction factor, also acts as a pattern recognition receptor that activates innate immune signaling in response to the retroviral capsid lattice. Binding to the viral capsid triggers its E3 ubiquitin ligase activity, and in concert with the heterodimeric ubiquitin conjugating enzyme complex UBE2V1-UBE2N (also known as UBC13-UEV1A complex) generates 'Lys-63'-linked polyubiquitin chains, which in turn are catalysts in the autophosphorylation of the MAP3K7/TAK1 complex (includes TAK1, TAB2, and TAB3). Activation of the MAP3K7/TAK1 complex by autophosphorylation results in the induction and expression of NF-kappa-B and MAPK-responsive inflammatory genes, thereby leading to an innate immune response in the infected cell. Plays a role in regulating autophagy through activation of autophagy regulator BECN1 by causing its dissociation from its inhibitors BCL2 and TAB2. The polypeptide is Tripartite motif-containing protein 5 (TRIM5) (Plecturocebus donacophilus (Bolivian gray titi monkey)).